We begin with the raw amino-acid sequence, 278 residues long: 4-hydroxy-3-methylbut-2-enyl diphosphate reductase (278 aa).

Residue Cys-12 participates in [4Fe-4S] cluster binding. Positions 36 and 70 each coordinate (2E)-4-hydroxy-3-methylbut-2-enyl diphosphate. 2 residues coordinate dimethylallyl diphosphate: His-36 and His-70. Positions 36 and 70 each coordinate isopentenyl diphosphate. A [4Fe-4S] cluster-binding site is contributed by Cys-92. Residue His-120 participates in (2E)-4-hydroxy-3-methylbut-2-enyl diphosphate binding. His-120 is a dimethylallyl diphosphate binding site. Isopentenyl diphosphate is bound at residue His-120. Glu-122 functions as the Proton donor in the catalytic mechanism. A (2E)-4-hydroxy-3-methylbut-2-enyl diphosphate-binding site is contributed by Thr-158. Cys-186 is a [4Fe-4S] cluster binding site. The (2E)-4-hydroxy-3-methylbut-2-enyl diphosphate site is built by Ser-214, Asn-216, and Ser-258. Positions 214, 216, and 258 each coordinate dimethylallyl diphosphate. Residues Ser-214, Asn-216, and Ser-258 each coordinate isopentenyl diphosphate.

The protein belongs to the IspH family. [4Fe-4S] cluster is required as a cofactor.

It carries out the reaction isopentenyl diphosphate + 2 oxidized [2Fe-2S]-[ferredoxin] + H2O = (2E)-4-hydroxy-3-methylbut-2-enyl diphosphate + 2 reduced [2Fe-2S]-[ferredoxin] + 2 H(+). The enzyme catalyses dimethylallyl diphosphate + 2 oxidized [2Fe-2S]-[ferredoxin] + H2O = (2E)-4-hydroxy-3-methylbut-2-enyl diphosphate + 2 reduced [2Fe-2S]-[ferredoxin] + 2 H(+). It functions in the pathway isoprenoid biosynthesis; dimethylallyl diphosphate biosynthesis; dimethylallyl diphosphate from (2E)-4-hydroxy-3-methylbutenyl diphosphate: step 1/1. It participates in isoprenoid biosynthesis; isopentenyl diphosphate biosynthesis via DXP pathway; isopentenyl diphosphate from 1-deoxy-D-xylulose 5-phosphate: step 6/6. In terms of biological role, catalyzes the conversion of 1-hydroxy-2-methyl-2-(E)-butenyl 4-diphosphate (HMBPP) into a mixture of isopentenyl diphosphate (IPP) and dimethylallyl diphosphate (DMAPP). Acts in the terminal step of the DOXP/MEP pathway for isoprenoid precursor biosynthesis. The chain is 4-hydroxy-3-methylbut-2-enyl diphosphate reductase from Campylobacter lari (strain RM2100 / D67 / ATCC BAA-1060).